A 364-amino-acid chain; its full sequence is Fructose-bisphosphate aldolase A (364 aa).

Tyr5 carries the post-translational modification Phosphotyrosine. Thr9 is subject to Phosphothreonine. 2 positions are modified to phosphoserine: Ser36 and Ser39. Lys42 carries the N6-acetyllysine; alternate modification. Residue Lys42 forms a Glycyl lysine isopeptide (Lys-Gly) (interchain with G-Cter in SUMO1); alternate linkage. Lys42 participates in a covalent cross-link: Glycyl lysine isopeptide (Lys-Gly) (interchain with G-Cter in SUMO2); alternate. Position 43 (Arg43) interacts with beta-D-fructose 1,6-bisphosphate. Phosphoserine is present on Ser46. Lys99 carries the N6-(2-hydroxyisobutyryl)lysine modification. N6-acetyllysine is present on Lys108. The residue at position 111 (Lys111) is an N6-acetyllysine; alternate. An N6-malonyllysine; alternate modification is found at Lys111. At Ser132 the chain carries Phosphoserine. Lys147 is modified (N6-(2-hydroxyisobutyryl)lysine). Glu188 (proton acceptor) is an active-site residue. The active-site Schiff-base intermediate with dihydroxyacetone-P is the Lys230. Position 272 is a phosphoserine (Ser272). Beta-D-fructose 1,6-bisphosphate contacts are provided by residues 272-274, Ser301, and Arg304; that span reads SGG. Lys312 bears the N6-malonyllysine mark. Lys330 carries the N6-acetyllysine modification.

It belongs to the class I fructose-bisphosphate aldolase family. Homotetramer. Interacts with SNX9 and WAS. Interacts with FBP2; the interaction blocks FBP2 inhibition by physiological concentrations of AMP and reduces inhibition by Ca(2+).

The protein resides in the cytoplasm. It is found in the myofibril. Its subcellular location is the sarcomere. The protein localises to the i band. It localises to the m line. It catalyses the reaction beta-D-fructose 1,6-bisphosphate = D-glyceraldehyde 3-phosphate + dihydroxyacetone phosphate. It participates in carbohydrate degradation; glycolysis; D-glyceraldehyde 3-phosphate and glycerone phosphate from D-glucose: step 4/4. In terms of biological role, catalyzes the reversible conversion of beta-D-fructose 1,6-bisphosphate (FBP) into two triose phosphate and plays a key role in glycolysis and gluconeogenesis. In addition, may also function as scaffolding protein. The protein is Fructose-bisphosphate aldolase A (ALDOA) of Pan troglodytes (Chimpanzee).